Reading from the N-terminus, the 327-residue chain is Neurogenic differentiation factor 6-A (327 aa).

Positions 17-85 (GANFPRDCVG…KKMTKARVDR (69 aa)) are disordered. The span at 24-46 (CVGDLKGNKQEPFEKEETLSHVM) shows a compositional bias: basic and acidic residues. The segment covering 47-63 (DDDDSEKDEDEREDGQD) has biased composition (acidic residues). The segment covering 68 to 80 (PRRRGPRKKKMTK) has biased composition (basic residues). The Nuclear localization signal signature appears at 74-80 (RKKKMTK). Residues 88 to 140 (VRRMEANARERNRMHGLNNALDSLRKVVPCYSKTQKLSKIETLRLAKNYIWAL) form the bHLH domain.

In terms of assembly, efficient DNA binding requires dimerization with another bHLH protein. As to expression, embryonic olfactory bulbs. In adult, expressed in brain, eye, intestine, muscle, ovary and skin.

Its subcellular location is the nucleus. Functionally, differentiation factor required for neurogenesis. Acts as an upstream activator of isl1. This is Neurogenic differentiation factor 6-A from Danio rerio (Zebrafish).